Reading from the N-terminus, the 201-residue chain is Small ribosomal subunit protein uS4 (201 aa).

Residues 22 to 47 are disordered; the sequence is TGKELARRPYAPGDHGNDRRGKLSEY. In terms of domain architecture, S4 RNA-binding spans 93–153; that stretch reads RRLDNMVYRL…EKSKNLDVIK (61 aa).

This sequence belongs to the universal ribosomal protein uS4 family. Part of the 30S ribosomal subunit. Contacts protein S5. The interaction surface between S4 and S5 is involved in control of translational fidelity.

Its function is as follows. One of the primary rRNA binding proteins, it binds directly to 16S rRNA where it nucleates assembly of the body of the 30S subunit. With S5 and S12 plays an important role in translational accuracy. This chain is Small ribosomal subunit protein uS4, found in Limosilactobacillus fermentum (strain NBRC 3956 / LMG 18251) (Lactobacillus fermentum).